A 451-amino-acid polypeptide reads, in one-letter code: Bacteriochlorophyllide d C-8(2)-methyltransferase (451 aa).

Residues 1-118 form the B12-binding domain; the sequence is MDDDSNQKPL…DDVANNRLKE (118 aa). In terms of domain architecture, Radical SAM core spans 148–377; that stretch reads VDGTKSIPIY…ALHLVIKSDR (230 aa). Positions 162, 166, and 169 each coordinate [4Fe-4S] cluster.

Belongs to the radical SAM superfamily. The cofactor is [4Fe-4S] cluster.

The protein localises to the cytoplasm. The enzyme catalyses 8,12-diethyl-3-vinylbacteriochlorophyllide d + S-adenosyl-L-methionine = 12-ethyl-8-propyl-3-vinylbacteriochlorophyllide d + S-adenosyl-L-homocysteine + H(+). It catalyses the reaction 12-ethyl-8-propyl-3-vinylbacteriochlorophyllide d + S-adenosyl-L-methionine = 12-ethyl-8-isobutyl-3-vinylbacteriochlorophyllide d + S-adenosyl-L-homocysteine + H(+). The protein operates within porphyrin-containing compound metabolism; bacteriochlorophyll biosynthesis (light-independent). Involved in the biosynthesis of the major light-harvesting pigment bacteriochlorophyll c (BChlc), which confers a significant competitive advantage to green sulfur bacteria living at limiting red and near-infrared light intensities. BchQ is a methyltransferase that adds two consecutive methyl groups to the ethyl carbon at the C-8(2) position of 8,12-diethyl-3-vinylbacteriochlorophyllide d to yield 12-ethyl-8-isobutyl-3-vinylbacteriochlorophyllide d. This Chlorobaculum tepidum (strain ATCC 49652 / DSM 12025 / NBRC 103806 / TLS) (Chlorobium tepidum) protein is Bacteriochlorophyllide d C-8(2)-methyltransferase.